Consider the following 163-residue polypeptide: Staphylokinase (163 aa).

Positions 1-27 (MLKRSLLFLTVLLLLFSFSSITNEVSA) are cleaved as a signal peptide.

The protein belongs to the staphylokinase family.

The protein resides in the secreted. In terms of biological role, potent plasminogen activator that converts plasminogen into plasmin. It forms a 1:1 complex with plasmin, which in turn activates other plasminogen molecules. The polypeptide is Staphylokinase (sak) (Staphylococcus phage phi13 (Bacteriophage phi-13)).